Here is a 597-residue protein sequence, read N- to C-terminus: Lipoprotein LpqB (597 aa).

The signal sequence occupies residues 1 to 28 (MTPGRRSALLSRSVCGAIVLAVLVTVSG). Residue Cys-29 is the site of N-palmitoyl cysteine attachment. Cys-29 is lipidated: S-diacylglycerol cysteine. Over residues 38-51 (PQAIGTINRDSPGS) the composition is skewed to polar residues. Residues 38–58 (PQAIGTINRDSPGSSVAAPAP) are disordered.

Belongs to the LpqB lipoprotein family.

The protein localises to the cell membrane. This is Lipoprotein LpqB from Rhodococcus jostii (strain RHA1).